We begin with the raw amino-acid sequence, 152 residues long: uncharacterized protein (152 aa).

It belongs to the antirestriction protein family.

This is an uncharacterized protein from Escherichia coli (strain K12).